We begin with the raw amino-acid sequence, 455 residues long: Bleomycin hydrolase (455 aa).

Position 1 is an N-acetylmethionine (M1). Residues C73 and H372 contribute to the active site. K391 bears the N6-acetyllysine mark. The active site involves N396.

It belongs to the peptidase C1 family. In terms of assembly, homohexamer. Interacts with NUDT12 (via ANK repeats).

It is found in the cytoplasm. The protein resides in the cytoplasmic granule. It carries out the reaction Inactivates bleomycin B2 (a cytotoxic glycometallopeptide) by hydrolysis of a carboxyamide bond of beta-aminoalanine, but also shows general aminopeptidase activity. The specificity varies somewhat with source, but amino acid arylamides of Met, Leu and Ala are preferred.. Its function is as follows. The normal physiological role of BLM hydrolase is unknown, but it catalyzes the inactivation of the antitumor drug BLM (a glycopeptide) by hydrolyzing the carboxamide bond of its B-aminoalaninamide moiety thus protecting normal and malignant cells from BLM toxicity. This is Bleomycin hydrolase (Blmh) from Mus musculus (Mouse).